The sequence spans 190 residues: GTP cyclohydrolase 1 1 (190 aa).

This sequence belongs to the GTP cyclohydrolase I family. In terms of assembly, homomer.

It carries out the reaction GTP + H2O = 7,8-dihydroneopterin 3'-triphosphate + formate + H(+). It functions in the pathway cofactor biosynthesis; 7,8-dihydroneopterin triphosphate biosynthesis; 7,8-dihydroneopterin triphosphate from GTP: step 1/1. The chain is GTP cyclohydrolase 1 1 from Pseudomonas putida (strain ATCC 47054 / DSM 6125 / CFBP 8728 / NCIMB 11950 / KT2440).